Consider the following 228-residue polypeptide: 2-C-methyl-D-erythritol 4-phosphate cytidylyltransferase (228 aa).

This sequence belongs to the IspD/TarI cytidylyltransferase family. IspD subfamily.

It catalyses the reaction 2-C-methyl-D-erythritol 4-phosphate + CTP + H(+) = 4-CDP-2-C-methyl-D-erythritol + diphosphate. The protein operates within isoprenoid biosynthesis; isopentenyl diphosphate biosynthesis via DXP pathway; isopentenyl diphosphate from 1-deoxy-D-xylulose 5-phosphate: step 2/6. In terms of biological role, catalyzes the formation of 4-diphosphocytidyl-2-C-methyl-D-erythritol from CTP and 2-C-methyl-D-erythritol 4-phosphate (MEP). The protein is 2-C-methyl-D-erythritol 4-phosphate cytidylyltransferase of Crocosphaera subtropica (strain ATCC 51142 / BH68) (Cyanothece sp. (strain ATCC 51142)).